We begin with the raw amino-acid sequence, 309 residues long: 4-hydroxy-3-methylbut-2-enyl diphosphate reductase (309 aa).

A [4Fe-4S] cluster-binding site is contributed by cysteine 13. Residues histidine 42 and histidine 75 each coordinate (2E)-4-hydroxy-3-methylbut-2-enyl diphosphate. Residues histidine 42 and histidine 75 each contribute to the dimethylallyl diphosphate site. Histidine 42 and histidine 75 together coordinate isopentenyl diphosphate. Cysteine 97 lines the [4Fe-4S] cluster pocket. A (2E)-4-hydroxy-3-methylbut-2-enyl diphosphate-binding site is contributed by histidine 125. Residue histidine 125 participates in dimethylallyl diphosphate binding. Position 125 (histidine 125) interacts with isopentenyl diphosphate. Glutamate 127 functions as the Proton donor in the catalytic mechanism. Threonine 165 contacts (2E)-4-hydroxy-3-methylbut-2-enyl diphosphate. Cysteine 195 contacts [4Fe-4S] cluster. Positions 223, 224, 225, and 267 each coordinate (2E)-4-hydroxy-3-methylbut-2-enyl diphosphate. Serine 223, serine 224, asparagine 225, and serine 267 together coordinate dimethylallyl diphosphate. Isopentenyl diphosphate-binding residues include serine 223, serine 224, asparagine 225, and serine 267.

Belongs to the IspH family. Requires [4Fe-4S] cluster as cofactor.

The enzyme catalyses isopentenyl diphosphate + 2 oxidized [2Fe-2S]-[ferredoxin] + H2O = (2E)-4-hydroxy-3-methylbut-2-enyl diphosphate + 2 reduced [2Fe-2S]-[ferredoxin] + 2 H(+). It carries out the reaction dimethylallyl diphosphate + 2 oxidized [2Fe-2S]-[ferredoxin] + H2O = (2E)-4-hydroxy-3-methylbut-2-enyl diphosphate + 2 reduced [2Fe-2S]-[ferredoxin] + 2 H(+). The protein operates within isoprenoid biosynthesis; dimethylallyl diphosphate biosynthesis; dimethylallyl diphosphate from (2E)-4-hydroxy-3-methylbutenyl diphosphate: step 1/1. It participates in isoprenoid biosynthesis; isopentenyl diphosphate biosynthesis via DXP pathway; isopentenyl diphosphate from 1-deoxy-D-xylulose 5-phosphate: step 6/6. In terms of biological role, catalyzes the conversion of 1-hydroxy-2-methyl-2-(E)-butenyl 4-diphosphate (HMBPP) into a mixture of isopentenyl diphosphate (IPP) and dimethylallyl diphosphate (DMAPP). Acts in the terminal step of the DOXP/MEP pathway for isoprenoid precursor biosynthesis. The sequence is that of 4-hydroxy-3-methylbut-2-enyl diphosphate reductase from Chlamydia felis (strain Fe/C-56) (Chlamydophila felis).